A 511-amino-acid chain; its full sequence is Lysine--tRNA ligase (511 aa).

Residues 1 to 20 are disordered; the sequence is MQKNTSQPTNTNEQSNQPSL. Residues glutamate 422 and glutamate 429 each coordinate Mg(2+).

The protein belongs to the class-II aminoacyl-tRNA synthetase family. As to quaternary structure, homodimer. Mg(2+) serves as cofactor.

Its subcellular location is the cytoplasm. It carries out the reaction tRNA(Lys) + L-lysine + ATP = L-lysyl-tRNA(Lys) + AMP + diphosphate. In Chlorobium chlorochromatii (strain CaD3), this protein is Lysine--tRNA ligase.